A 236-amino-acid polypeptide reads, in one-letter code: MFDSLVDFLKTNIDELNGHEVRISSEFKEHHNEDSKYIIKNWLFSSPEYRKWRITRLDGGKKLQVFNTVAYPNFDCEMPILGADILWFGTSQKLLAILDYQPLIQEGKYLEKYCSSLGIIKKKYSAFDNNKMKNIYDSKKYFSPWVIICRGNKLNLDRDLNNIFHSFVNNYLKIHKSNPVNQFLDTEKIKINQIKYDKYSFEKDPADKLFKSFFGEKWTKKFVNKFLFTLNNEIIY.

The protein belongs to the HY2 family.

The catalysed reaction is 15,16-dihydrobiliverdin + oxidized 2[4Fe-4S]-[ferredoxin] = biliverdin IXalpha + reduced 2[4Fe-4S]-[ferredoxin] + 2 H(+). Catalyzes the two-electron reduction of biliverdin IX-alpha at the C15 methine bridge. In Prochlorococcus marinus (strain MIT 9215), this protein is 15,16-dihydrobiliverdin:ferredoxin oxidoreductase.